Consider the following 512-residue polypeptide: Cytochrome P450 76C2 (512 aa).

Residues 3-23 traverse the membrane as a helical segment; that stretch reads IIFEQALFPLFCFVLSFFIIF. C451 serves as a coordination point for heme.

This sequence belongs to the cytochrome P450 family. Requires heme as cofactor.

It is found in the membrane. In Arabidopsis thaliana (Mouse-ear cress), this protein is Cytochrome P450 76C2 (CYP76C2).